The following is a 190-amino-acid chain: Peptide deformylase (190 aa).

2 residues coordinate Fe cation: Cys-94 and His-136. The active site involves Glu-137. Fe cation is bound at residue His-140.

This sequence belongs to the polypeptide deformylase family. Requires Fe(2+) as cofactor.

The enzyme catalyses N-terminal N-formyl-L-methionyl-[peptide] + H2O = N-terminal L-methionyl-[peptide] + formate. Its function is as follows. Removes the formyl group from the N-terminal Met of newly synthesized proteins. Requires at least a dipeptide for an efficient rate of reaction. N-terminal L-methionine is a prerequisite for activity but the enzyme has broad specificity at other positions. This is Peptide deformylase from Chlorobium luteolum (strain DSM 273 / BCRC 81028 / 2530) (Pelodictyon luteolum).